The primary structure comprises 315 residues: Gamma-hemolysin component C (315 aa).

Residues Met-1 to Ala-29 form the signal peptide.

The protein belongs to the aerolysin family. In terms of assembly, toxicity requires sequential binding and synergistic association of a class S and a class F component which form heterooligomeric complexes. HlgC (class S) associates with HlgB (class F) thus forming an CB toxin.

Its function is as follows. Toxin that seems to act by forming pores in the membrane of the cell. Has a hemolytic and a leucotoxic activity. This Staphylococcus aureus (strain Mu50 / ATCC 700699) protein is Gamma-hemolysin component C (hlgC).